The sequence spans 60 residues: Conotoxin Cl1.1 (60 aa).

An N-terminal signal peptide occupies residues 1 to 19 (MRCLPVIVILLLLISSAAA). Positions 20–48 (VVEGPLRVNRRLRPRKAPVDMQARDWNWG) are excised as a propeptide.

This sequence belongs to the conotoxin T superfamily. Post-translationally, contains 2 disulfide bonds. Expressed by the venom duct.

The protein localises to the secreted. This chain is Conotoxin Cl1.1, found in Californiconus californicus (California cone).